Here is a 371-residue protein sequence, read N- to C-terminus: MMVPSFILWDVGSSVYTYGSLFIIALIIWHVRRSHRGLRLGPIKSCTKCFRRIKQKPSDRTLRVKKRTTKEETEKLQKLLSNMKRQGWLPQEGSVRRLLCSDPSCPICNAMALEIQQLLGVENKKTSSSLLRHSRSFSCLEALSPPKVLNDQSSELSKVLNGQSSELSKVLNGQSSELSKVLNDQSSELSKVLNDQSSELSSQHSKDISLPPKFMQSQSTDQKLTLSAPLSTGNTVLQCYHPAPQQQPEPQGSNAFQDVSGLSSSSMDEHGVPANQQKKRKKTKKLVSKNQAAPSEAEMENKMTFFSHWVNPEVKCDRPEESFAFYKSETGAKPKTGEPKKSSAKVRAEEPNLEKHAKDLKAKPLHAKRNI.

The helical transmembrane segment at 7 to 29 (ILWDVGSSVYTYGSLFIIALIIW) threads the bilayer. Positions 62 to 86 (LRVKKRTTKEETEKLQKLLSNMKRQ) form a coiled coil. 2 stretches are compositionally biased toward polar residues: residues 189-203 (LSKV…LSSQ) and 244-266 (PQQQ…SSSS). 3 disordered regions span residues 189–222 (LSKV…STDQ), 240–299 (YHPA…EAEM), and 326–371 (YKSE…KRNI). Phosphoserine occurs at positions 197 and 198. The span at 277–287 (QKKRKKTKKLV) shows a compositional bias: basic residues. Positions 330 to 362 (TGAKPKTGEPKKSSAKVRAEEPNLEKHAKDLKA) are enriched in basic and acidic residues.

It belongs to the SPATA31 family.

The protein localises to the membrane. In Mus musculus (Mouse), this protein is Protein SPATA31F3 (Spata31f3).